A 352-amino-acid polypeptide reads, in one-letter code: C-X-C chemokine receptor type 4 (352 aa).

The tract at residues 1–21 (MEGISIYTSDNYTEEMGSGDY) is important for chemokine binding and signaling. Topologically, residues 1 to 38 (MEGISIYTSDNYTEEMGSGDYDSIKEPCFREENAHFNR) are extracellular. Tyrosine 7 carries the post-translational modification Sulfotyrosine. A glycan (N-linked (GlcNAc...) asparagine) is linked at asparagine 11. Position 12 is a sulfotyrosine (tyrosine 12). O-linked (Xyl...) (chondroitin sulfate) serine glycosylation is present at serine 18. Sulfotyrosine is present on tyrosine 21. Intrachain disulfides connect cysteine 28–cysteine 274 and cysteine 109–cysteine 186. A helical transmembrane segment spans residues 39–63 (IFLPTIYSIIFLTGIVGNGLVILVM). Over 64–77 (GYQKKLRSMTDKYR) the chain is Cytoplasmic. A helical transmembrane segment spans residues 78-99 (LHLSVADLLFVITLPFWAVDAV). Residues 94–97 (WAVD) form a chemokine binding region. Residues 100–110 (ANWYFGKFLCK) lie on the Extracellular side of the membrane. Residues 111–130 (AVHVIYTVNLYSSVLILAFI) form a helical membrane-spanning segment. Positions 113–117 (HVIYT) are chemokine binding. The Cytoplasmic segment spans residues 131–154 (SLDRYLAIVHATNSQRPRKLLAEK). The Important for signaling motif lies at 133-135 (DRY). The tract at residues 135–147 (YLAIVHATNSQRP) is involved in dimerization; when bound to chemokine. Residues 155–174 (VVYVGVWIPALLLTIPDFIF) traverse the membrane as a helical segment. The Extracellular segment spans residues 175-195 (ANVSEADDRYICDRFYPNDLW). Residues 186–190 (CDRFY) are chemokine binding, important for signaling. Residues 191–210 (PNDLWVVVFQFQHIMVGLIL) form an involved in dimerization region. The helical transmembrane segment at 196–216 (VVVFQFQHIMVGLILPGIVIL) threads the bilayer. The Cytoplasmic segment spans residues 217–241 (SCYCIIISKLSHSKGHQKRKALKTT). Residues 242 to 261 (VILILAFFACWLPYYIGISI) traverse the membrane as a helical segment. The Extracellular segment spans residues 262–282 (DSFILLEIIRQGCEFENTVHK). The involved in dimerization stretch occupies residues 266 to 268 (LLE). Residues 283-302 (WISITEALAFFHCCLNPILY) form a helical membrane-spanning segment. Over 303 to 352 (AFLGAKFKTSAQHALTSVSRGSSLKILSKGKRGGHSSVSTESESSSFHSS) the chain is Cytoplasmic. 2 positions are modified to phosphoserine: serine 319 and serine 321. A phosphoserine; by PKC and GRK6 mark is found at serine 324 and serine 325. The interval 329-352 (LSKGKRGGHSSVSTESESSSFHSS) is disordered. Phosphoserine; by GRK6 is present on serine 330. Residue lysine 331 forms a Glycyl lysine isopeptide (Lys-Gly) (interchain with G-Cter in ubiquitin) linkage. Low complexity predominate over residues 337–352 (HSSVSTESESSSFHSS). The residue at position 339 (serine 339) is a Phosphoserine; by GRK6. Phosphoserine is present on residues serine 348 and serine 351.

Belongs to the G-protein coupled receptor 1 family. As to quaternary structure, monomer. Can form homodimers. Interacts with CD164. Interacts with ARRB2; the interaction is dependent on the C-terminal phosphorylation of CXCR4 and allows activation of MAPK1 and MAPK3. Interacts with ARR3; the interaction is dependent on the C-terminal phosphorylation of CXCR4 and modulates calcium mobilization. Interacts with RNF113A; the interaction, enhanced by CXCL12, promotes CXCR4 ubiquitination and subsequent degradation. Interacts (via the cytoplasmic C-terminal) with ITCH (via the WW domains I and II); the interaction, enhanced by CXCL12, promotes CXCR4 ubiquitination and leads to its degradation. Interacts with extracellular ubiquitin. Interacts with DBN1; this interaction is enhanced by antigenic stimulation. Following LPS binding, may form a complex with GDF5, HSP90AA1 and HSPA8. Phosphorylated on agonist stimulation. Rapidly phosphorylated on serine and threonine residues in the C-terminal. Phosphorylation at Ser-324 and Ser-325 leads to recruitment of ITCH, ubiquitination and protein degradation. In terms of processing, ubiquitinated after ligand binding, leading to its degradation. Ubiquitinated by ITCH at the cell membrane on agonist stimulation. The ubiquitin-dependent mechanism, endosomal sorting complex required for transport (ESCRT), then targets CXCR4 for lysosomal degradation. This process is dependent also on prior Ser-/Thr-phosphorylation in the C-terminal of CXCR4. Also binding of ARRB1 to STAM negatively regulates CXCR4 sorting to lysosomes though modulating ubiquitination of SFR5S. Post-translationally, sulfation is required for efficient binding of CXCL12/SDF-1alpha and promotes its dimerization. O- and N-glycosylated. N-glycosylation can mask coreceptor function. The O-glycosylation chondroitin sulfate attachment does not affect interaction with CXCL12/SDF-1alpha nor its coreceptor activity.

It localises to the cell membrane. The protein resides in the cell junction. It is found in the early endosome. The protein localises to the late endosome. Its subcellular location is the lysosome. In terms of biological role, receptor for the C-X-C chemokine CXCL12/SDF-1 that transduces a signal by increasing intracellular calcium ion levels and enhancing MAPK1/MAPK3 activation. Involved in the AKT signaling cascade. Plays a role in regulation of cell migration, e.g. during wound healing. Acts as a receptor for extracellular ubiquitin; leading to enhanced intracellular calcium ions and reduced cellular cAMP levels. Binds bacterial lipopolysaccharide (LPS) et mediates LPS-induced inflammatory response, including TNF secretion by monocytes. Involved in hematopoiesis and in cardiac ventricular septum formation. Also plays an essential role in vascularization of the gastrointestinal tract, probably by regulating vascular branching and/or remodeling processes in endothelial cells. Involved in cerebellar development. In the CNS, could mediate hippocampal-neuron survival. The polypeptide is C-X-C chemokine receptor type 4 (CXCR4) (Saimiri sciureus (Common squirrel monkey)).